A 345-amino-acid polypeptide reads, in one-letter code: Phosphoribosylformylglycinamidine cyclo-ligase (345 aa).

Belongs to the AIR synthase family.

The protein localises to the cytoplasm. The enzyme catalyses 2-formamido-N(1)-(5-O-phospho-beta-D-ribosyl)acetamidine + ATP = 5-amino-1-(5-phospho-beta-D-ribosyl)imidazole + ADP + phosphate + H(+). It participates in purine metabolism; IMP biosynthesis via de novo pathway; 5-amino-1-(5-phospho-D-ribosyl)imidazole from N(2)-formyl-N(1)-(5-phospho-D-ribosyl)glycinamide: step 2/2. The sequence is that of Phosphoribosylformylglycinamidine cyclo-ligase from Shewanella putrefaciens (strain CN-32 / ATCC BAA-453).